Here is a 174-residue protein sequence, read N- to C-terminus: Bifunctional protein PyrR 2 (174 aa).

Substrate-binding positions include 39-40, 100-108, and Arg133; these read TR and DDVLFTGRT. Positions 96-108 match the PRPP-binding motif; it reads VILVDDVLFTGRT.

The protein belongs to the purine/pyrimidine phosphoribosyltransferase family. PyrR subfamily. Homodimer and homohexamer; in equilibrium.

It carries out the reaction UMP + diphosphate = 5-phospho-alpha-D-ribose 1-diphosphate + uracil. Its function is as follows. Regulates transcriptional attenuation of the pyrimidine nucleotide (pyr) operon by binding in a uridine-dependent manner to specific sites on pyr mRNA. This disrupts an antiterminator hairpin in the RNA and favors formation of a downstream transcription terminator, leading to a reduced expression of downstream genes. In terms of biological role, also displays a weak uracil phosphoribosyltransferase activity which is not physiologically significant. The chain is Bifunctional protein PyrR 2 (pyrR2) from Lactiplantibacillus plantarum (strain ATCC BAA-793 / NCIMB 8826 / WCFS1) (Lactobacillus plantarum).